The chain runs to 907 residues: Dual serine/threonine and tyrosine protein kinase (907 aa).

The stretch at 373-409 forms a coiled coil; the sequence is RKKENELYESLMNIANRKQEEMKDMIVETLNTMKEEL. The region spanning 630–884 is the Protein kinase domain; it reads PKLGQELGRG…PLLGIVQPML (255 aa). ATP-binding positions include 636-644 and K659; that span reads LGRGQYGVV. D755 (proton acceptor) is an active-site residue.

It belongs to the protein kinase superfamily. Ser/Thr protein kinase family.

The protein localises to the cytoplasm. It is found in the cell membrane. Its subcellular location is the apical cell membrane. The protein resides in the basolateral cell membrane. It localises to the cell junction. It catalyses the reaction L-seryl-[protein] + ATP = O-phospho-L-seryl-[protein] + ADP + H(+). It carries out the reaction L-threonyl-[protein] + ATP = O-phospho-L-threonyl-[protein] + ADP + H(+). The catalysed reaction is L-tyrosyl-[protein] + ATP = O-phospho-L-tyrosyl-[protein] + ADP + H(+). Acts as a positive regulator of ERK phosphorylation downstream of fibroblast growth factor-receptor activation. Involved in the regulation of both caspase-dependent apoptosis and caspase-independent cell death. In the skin, it plays a predominant role in suppressing caspase-dependent apoptosis in response to UV stress in a range of dermal cell types. The polypeptide is Dual serine/threonine and tyrosine protein kinase (Macaca mulatta (Rhesus macaque)).